The primary structure comprises 739 residues: POU domain, class 2, transcription factor 1 (739 aa).

The segment covering 1–11 (MNNPSETSKPS) has biased composition (polar residues). 5 disordered regions span residues 1 to 39 (MNNP…GGPI), 67 to 95 (SLNV…SVQA), 253 to 277 (TPIQ…EEPS), 353 to 378 (DSTL…RRKK), and 489 to 553 (SVTG…SSPL). Low complexity predominate over residues 81–95 (SQQPSQPSQQPSVQA). Residues 274–348 (EEPSDLEELE…LLEKWLNDAE (75 aa)) form the POU-specific domain. Low complexity predominate over residues 353-364 (DSTLSSPSALNS). Residues 375 to 434 (RRKKRTSIETNIRVALEKSFLENQKPTSEEITMIADQLNMEKEVIRVWFCNRRQKEKRIN) constitute a DNA-binding region (homeobox). A compositionally biased stretch (low complexity) spans 489 to 552 (SVTGTTETTS…QTTSTPLSSP (64 aa)).

It belongs to the POU transcription factor family. Class-2 subfamily. Interacts with NR3C1, AR and PGR.

It localises to the nucleus. In terms of biological role, transcription factor that binds to the octamer motif (5'-ATTTGCAT-3') and activates the promoters of the genes for some small nuclear RNAs (snRNA) and of genes such as those for histone H2B and immunoglobulins. Modulates transcription transactivation by NR3C1, AR and PGR. The polypeptide is POU domain, class 2, transcription factor 1 (POU2F1) (Gallus gallus (Chicken)).